The following is a 250-amino-acid chain: Type III pantothenate kinase (250 aa).

6–13 (DVGNTNTV) is an ATP binding site. 103–106 (GADR) contributes to the substrate binding site. The active-site Proton acceptor is the Asp105. Position 125 (Asp125) interacts with K(+). Residue Thr128 participates in ATP binding. Thr180 is a substrate binding site.

Belongs to the type III pantothenate kinase family. In terms of assembly, homodimer. NH4(+) serves as cofactor. K(+) is required as a cofactor.

Its subcellular location is the cytoplasm. It catalyses the reaction (R)-pantothenate + ATP = (R)-4'-phosphopantothenate + ADP + H(+). It functions in the pathway cofactor biosynthesis; coenzyme A biosynthesis; CoA from (R)-pantothenate: step 1/5. Functionally, catalyzes the phosphorylation of pantothenate (Pan), the first step in CoA biosynthesis. The chain is Type III pantothenate kinase from Frankia alni (strain DSM 45986 / CECT 9034 / ACN14a).